The sequence spans 357 residues: Sorbitol dehydrogenase 1 (357 aa).

C43 provides a ligand contact to Zn(2+). Y49 contacts substrate. H68 and E69 together coordinate Zn(2+). E154 is a binding site for substrate. NAD(+)-binding positions include D202, K207, 275–277, and 299–301; these read VGM and CFR. Substrate-binding residues include R301 and Y302.

The protein belongs to the zinc-containing alcohol dehydrogenase family. In terms of assembly, homotetramer. Zn(2+) serves as cofactor.

The enzyme catalyses keto-D-fructose + NADH + H(+) = D-sorbitol + NAD(+). It carries out the reaction xylitol + NAD(+) = D-xylulose + NADH + H(+). Functionally, polyol dehydrogenase that catalyzes the reversible NAD(+)-dependent oxidation of various sugar alcohols. Is active with D-sorbitol (D-glucitol) and xylitol as substrates, leading to the C2-oxidized product D-fructose and D-xylulose, respectively. Is likely involved in the utilization of D-sorbitol as a sole carbon source for growth. Has no activity on mannitol and primary alcohols such as ethanol. The sequence is that of Sorbitol dehydrogenase 1 (SOR1) from Saccharomyces cerevisiae (strain ATCC 204508 / S288c) (Baker's yeast).